The following is a 464-amino-acid chain: Gasdermin-A3 (464 aa).

Residues methionine 1 to glycine 261 are triggers pyroptosis. Position 9-13 (arginine 9–arginine 13) interacts with a cardiolipin. Beta stranded transmembrane passes span asparagine 78–valine 95, valine 99–valine 120, valine 164–serine 180, and leucine 184–isoleucine 198. A coiled-coil region spans residues glutamate 255–alanine 327.

It belongs to the gasdermin family. In terms of assembly, homooligomer; homooligomeric ring-shaped pore complex containing 18-36 subunits when inserted in the membrane. Post-translationally, cleavage relieves autoinhibition by releasing the N-terminal moiety (Gasdermin-A3, N-terminal) that initiates pyroptosis. In contrast to Gsdma, not cleaved by bacterial effector protein SpeB. In terms of processing, palmitoylated. As to expression, highest levels in skin with weak expression in placenta and testis. Not detected in the gastrointestinal tract. In skin, expressed in postnatal hair follicles and epidermis as well as sebaceous gland basal cells.

The protein localises to the cytoplasm. The protein resides in the cytosol. It is found in the cell membrane. Its subcellular location is the mitochondrion membrane. Its activity is regulated as follows. The full-length protein before cleavage is inactive: intramolecular interactions between N- and C-terminal domains mediate autoinhibition in the absence of activation signal. The intrinsic pyroptosis-inducing activity is carried by the released N-terminal moiety (Gasdermin-A3, N-terminal). In terms of biological role, precursor of a pore-forming protein involved in the transition from catagen to telogen at the end of hair follicle morphogenesis. This form constitutes the precursor of the pore: upon cleavage, the released N-terminal moiety (Gasdermin-A3, N-terminal) binds to membranes and forms pores, triggering pyroptosis. This form acts as a sensor of infection: activation is triggered by cleavage by some bacterial effector protein, which releases the N-terminal moiety (Gasdermin-A3, N-terminal). Pore-forming protein that causes membrane permeabilization and pyroptosis. Released upon cleavage by some bacterial effector protein, and binds to membrane inner leaflet lipids. Homooligomerizes within the membrane and forms pores of 10-15 nanometers (nm) of inner diameter, allowing the release of mature interleukin-1 (IL1B and IL18) and triggering pyroptosis. Binds to membrane inner leaflet lipids, including bisphosphorylated phosphatidylinositols, such as phosphatidylinositol (4,5)-bisphosphate, as well as phosphatidylinositol (3,4,5)-bisphosphate, and more weakly to monophosphorylated phosphatidylinositols. Also binds to bacterial and mitochondrial lipids, including cardiolipin, and exhibits bactericidal activity. Plays a role in the transition from catagen to telogen at the end of hair follicle morphogenesis, possibly by regulating hair follicle stem cell niche maintenance. Also required for mammary gland development. In Mus musculus (Mouse), this protein is Gasdermin-A3.